A 311-amino-acid chain; its full sequence is tRNA dimethylallyltransferase (311 aa).

An ATP-binding site is contributed by 12 to 19 (GPTASGKT). Residue 14 to 19 (TASGKT) coordinates substrate. Interaction with substrate tRNA stretches follow at residues 37–40 (DSAM) and 161–165 (QRIQR).

This sequence belongs to the IPP transferase family. As to quaternary structure, monomer. Mg(2+) is required as a cofactor.

It carries out the reaction adenosine(37) in tRNA + dimethylallyl diphosphate = N(6)-dimethylallyladenosine(37) in tRNA + diphosphate. In terms of biological role, catalyzes the transfer of a dimethylallyl group onto the adenine at position 37 in tRNAs that read codons beginning with uridine, leading to the formation of N6-(dimethylallyl)adenosine (i(6)A). The polypeptide is tRNA dimethylallyltransferase (Coxiella burnetii (strain RSA 331 / Henzerling II)).